The chain runs to 160 residues: MTDTSNSLQDLGTLTGAPSAQPVKSVEPKIDAQGRAYGTGRRKEAVARVWIKPGSGKIIINGRDQETYFARPVLRMVIAQPLIEAGRATEFDVIATVKGSGLMGQAGAVRHGISRALVAYEPGLRAVLKPFGFMTRDPRVVERKKYGKAKARRSFQFSKR.

Over residues 1–18 (MTDTSNSLQDLGTLTGAP) the composition is skewed to polar residues. A disordered region spans residues 1 to 37 (MTDTSNSLQDLGTLTGAPSAQPVKSVEPKIDAQGRAY).

Belongs to the universal ribosomal protein uS9 family.

The polypeptide is Small ribosomal subunit protein uS9 (Hyphomonas neptunium (strain ATCC 15444)).